Reading from the N-terminus, the 936-residue chain is 2-oxoglutarate dehydrogenase E1 component (936 aa).

This sequence belongs to the alpha-ketoglutarate dehydrogenase family. As to quaternary structure, homodimer. Part of the 2-oxoglutarate dehydrogenase (OGDH) complex composed of E1 (2-oxoglutarate dehydrogenase), E2 (dihydrolipoamide succinyltransferase) and E3 (dihydrolipoamide dehydrogenase); the complex contains multiple copies of the three enzymatic components (E1, E2 and E3). Thiamine diphosphate is required as a cofactor.

The enzyme catalyses N(6)-[(R)-lipoyl]-L-lysyl-[protein] + 2-oxoglutarate + H(+) = N(6)-[(R)-S(8)-succinyldihydrolipoyl]-L-lysyl-[protein] + CO2. Functionally, E1 component of the 2-oxoglutarate dehydrogenase (OGDH) complex which catalyzes the decarboxylation of 2-oxoglutarate, the first step in the conversion of 2-oxoglutarate to succinyl-CoA and CO(2). The polypeptide is 2-oxoglutarate dehydrogenase E1 component (sucA) (Rickettsia prowazekii (strain Madrid E)).